A 522-amino-acid chain; its full sequence is Peptide chain release factor 3 (522 aa).

One can recognise a tr-type G domain in the interval 10 to 277 (ASRKTFAIIS…TFVDFAPAPS (268 aa)). Residues 19 to 26 (SHPDAGKT), 87 to 91 (DTPGH), and 141 to 144 (NKMD) contribute to the GTP site.

Belongs to the TRAFAC class translation factor GTPase superfamily. Classic translation factor GTPase family. PrfC subfamily.

It is found in the cytoplasm. In terms of biological role, increases the formation of ribosomal termination complexes and stimulates activities of RF-1 and RF-2. It binds guanine nucleotides and has strong preference for UGA stop codons. It may interact directly with the ribosome. The stimulation of RF-1 and RF-2 is significantly reduced by GTP and GDP, but not by GMP. The chain is Peptide chain release factor 3 from Listeria welshimeri serovar 6b (strain ATCC 35897 / DSM 20650 / CCUG 15529 / CIP 8149 / NCTC 11857 / SLCC 5334 / V8).